Reading from the N-terminus, the 845-residue chain is Probable inorganic carbon transporter subunit DabA (845 aa).

Residues 1–20 form a disordered region; that stretch reads MPMASGDESMSARSENPVQS. Zn(2+) is bound by residues cysteine 345, aspartate 347, histidine 516, and cysteine 531.

This sequence belongs to the inorganic carbon transporter (TC 9.A.2) DabA family. Forms a complex with DabB. It depends on Zn(2+) as a cofactor.

It localises to the cell inner membrane. In terms of biological role, part of an energy-coupled inorganic carbon pump. This Azotobacter vinelandii (strain DJ / ATCC BAA-1303) protein is Probable inorganic carbon transporter subunit DabA.